The primary structure comprises 550 residues: Parathyroid hormone 2 receptor (550 aa).

Positions 1 to 24 are cleaved as a signal peptide; it reads MAGLGASLHVWGWLMLGSCLLARA. Residues 27–145 are Extracellular-facing; that stretch reads DSDGTITIEE…GKQEFFERLY (119 aa). Asparagine 51, asparagine 106, asparagine 116, and asparagine 121 each carry an N-linked (GlcNAc...) asparagine glycan. The helical transmembrane segment at 146-169 threads the bilayer; sequence VMYTVGYSISFGSLAVAILIIGYF. At 170–176 the chain is on the cytoplasmic side; the sequence is RRLHCTR. The chain crosses the membrane as a helical span at residues 177-196; it reads NYIHMHLFVSFMLRATSIFV. Topologically, residues 197 to 237 are extracellular; the sequence is KDRVVHAHIGVKELESLIMQDDPQNSIEATSVDKSQYIGCK. The helical transmembrane segment at 238–260 threads the bilayer; that stretch reads IAVVMFIYFLATNYYWILVEGLY. The Cytoplasmic segment spans residues 261-275; sequence LHNLIFVAFFSDTKY. A helical transmembrane segment spans residues 276–297; that stretch reads LWGFILIGWGFPAAFVAAWAVA. Residues 298–316 are Extracellular-facing; the sequence is RATLADARCWELSAGDIKW. A helical membrane pass occupies residues 317–337; the sequence is IYQAPILAAIGLNFILFLNTV. The Cytoplasmic portion of the chain corresponds to 338 to 364; the sequence is RVLATKIWETNAVGHDTRKQYRKLAKS. The chain crosses the membrane as a helical span at residues 365 to 383; sequence TLVLVLVFGVHYIVFVCLP. At 384–394 the chain is on the extracellular side; it reads HSFTGLGWEIR. A helical membrane pass occupies residues 395-417; that stretch reads MHCELFFNSFQGFFVSIIYCYCN. Over 418-550 the chain is Cytoplasmic; that stretch reads GEVQAEVKKM…GCQGETEDVL (133 aa). Residues 511–531 are compositionally biased toward basic and acidic residues; that stretch reads EETKEDSGRQGDDILMEKPSR. Positions 511–550 are disordered; it reads EETKEDSGRQGDDILMEKPSRPMESNPDTEGCQGETEDVL.

Belongs to the G-protein coupled receptor 2 family. Binds to TIPF39/TIP39. In terms of tissue distribution, expressed abundantly in brain and pancreas. Also expressed in the testis.

Its subcellular location is the cell membrane. Functionally, this is a specific receptor for parathyroid hormone. The activity of this receptor is mediated by G proteins which activate adenylyl cyclase. PTH2R may be responsible for PTH effects in a number of physiological systems. It may play a significant role in pancreatic function. PTH2R presence in neurons indicates that it may function as a neurotransmitter receptor. The protein is Parathyroid hormone 2 receptor (PTH2R) of Homo sapiens (Human).